The primary structure comprises 365 residues: DNA polymerase IV 1 (365 aa).

Residues 6–196 (VLHIDMDYFF…LNVSKLWGIG (191 aa)) enclose the UmuC domain. The Mg(2+) site is built by D10 and D113. Residue E114 is part of the active site.

Belongs to the DNA polymerase type-Y family. As to quaternary structure, monomer. It depends on Mg(2+) as a cofactor.

The protein localises to the cytoplasm. The catalysed reaction is DNA(n) + a 2'-deoxyribonucleoside 5'-triphosphate = DNA(n+1) + diphosphate. In terms of biological role, poorly processive, error-prone DNA polymerase involved in untargeted mutagenesis. Copies undamaged DNA at stalled replication forks, which arise in vivo from mismatched or misaligned primer ends. These misaligned primers can be extended by PolIV. Exhibits no 3'-5' exonuclease (proofreading) activity. May be involved in translesional synthesis. The sequence is that of DNA polymerase IV 1 (dbh1) from Methanosarcina mazei (strain ATCC BAA-159 / DSM 3647 / Goe1 / Go1 / JCM 11833 / OCM 88) (Methanosarcina frisia).